The following is a 432-amino-acid chain: MLFKKDRKQETAYFSDSNGQQKNRIQLTNKHADVKKQLKMVRLGDAELYVLEQLQPLIQENIVNIVDAFYKNLDHESSLMDIINDHSSVDRLKQTLKRHIQEMFAGVIDDEFIEKRNRIASIHLRIGLLPKWYMGAFQELLLSMIDIYEASITNQQELLKAIKATTKILNLEQQLVLEAFQSEYNQTRDEQEEKKNLLHQKIQETSGSIANLFSETSRSVQELVDKSEGISQASKAGTVTSSTVEEKSIGGKKELEVQQKQMNKIDTSLVQIEKEMVKLDEIAQQIEKIFGIVTGIAEQTNLLSLNASIESARAGEHGKGFAVVANEVRKLSEDTKKTVSTVSELVNNTNTQINIVSKHIKDVNELVSESKEKMTQINRLFDEIVHSMKISKEQSGKIDVDLQAFLGGLQEVSRAVSHVAASVDSLVILTEE.

One can recognise a Methyl-accepting transducer domain in the interval 184–420; it reads YNQTRDEQEE…EVSRAVSHVA (237 aa).

The protein belongs to the methyl-accepting chemotaxis (MCP) protein family. In terms of assembly, homotetramer.

Heme-containing signal transducer responsible for aerotaxis, the migratory response toward or away from oxygen. In Bacillus subtilis (strain 168), this protein is Heme-based aerotactic transducer HemAT (hemAT).